A 282-amino-acid polypeptide reads, in one-letter code: Bis(5'-nucleosyl)-tetraphosphatase, symmetrical (282 aa).

This sequence belongs to the Ap4A hydrolase family.

It carries out the reaction P(1),P(4)-bis(5'-adenosyl) tetraphosphate + H2O = 2 ADP + 2 H(+). Its function is as follows. Hydrolyzes diadenosine 5',5'''-P1,P4-tetraphosphate to yield ADP. This Paraburkholderia phymatum (strain DSM 17167 / CIP 108236 / LMG 21445 / STM815) (Burkholderia phymatum) protein is Bis(5'-nucleosyl)-tetraphosphatase, symmetrical.